We begin with the raw amino-acid sequence, 57 residues long: DNA gyrase inhibitor YacG (57 aa).

Zn(2+) contacts are provided by Cys-10, Cys-13, Cys-25, and Cys-29.

It belongs to the DNA gyrase inhibitor YacG family. As to quaternary structure, interacts with GyrB. The cofactor is Zn(2+).

Its function is as follows. Inhibits all the catalytic activities of DNA gyrase by preventing its interaction with DNA. Acts by binding directly to the C-terminal domain of GyrB, which probably disrupts DNA binding by the gyrase. The protein is DNA gyrase inhibitor YacG of Brucella melitensis biotype 1 (strain ATCC 23456 / CCUG 17765 / NCTC 10094 / 16M).